Consider the following 313-residue polypeptide: Glycine--tRNA ligase alpha subunit (313 aa).

The protein belongs to the class-II aminoacyl-tRNA synthetase family. As to quaternary structure, tetramer of two alpha and two beta subunits.

The protein localises to the cytoplasm. The enzyme catalyses tRNA(Gly) + glycine + ATP = glycyl-tRNA(Gly) + AMP + diphosphate. In Leuconostoc mesenteroides subsp. mesenteroides (strain ATCC 8293 / DSM 20343 / BCRC 11652 / CCM 1803 / JCM 6124 / NCDO 523 / NBRC 100496 / NCIMB 8023 / NCTC 12954 / NRRL B-1118 / 37Y), this protein is Glycine--tRNA ligase alpha subunit.